A 213-amino-acid polypeptide reads, in one-letter code: Ribonuclease T (213 aa).

An Exonuclease domain is found at 28–202; the sequence is VVVDVETGGF…YDTEQTARLF (175 aa). Mg(2+)-binding residues include Asp-31, Glu-33, His-189, and Asp-194. His-189 acts as the Proton donor/acceptor in catalysis.

The protein belongs to the RNase T family. Homodimer. Requires Mg(2+) as cofactor.

In terms of biological role, trims short 3' overhangs of a variety of RNA species, leaving a one or two nucleotide 3' overhang. Responsible for the end-turnover of tRNA: specifically removes the terminal AMP residue from uncharged tRNA (tRNA-C-C-A). Also appears to be involved in tRNA biosynthesis. The sequence is that of Ribonuclease T from Xanthomonas euvesicatoria pv. vesicatoria (strain 85-10) (Xanthomonas campestris pv. vesicatoria).